Reading from the N-terminus, the 340-residue chain is Sodium/bile acid cotransporter 7 (340 aa).

Residues M1–E10 lie on the Cytoplasmic side of the membrane. A helical membrane pass occupies residues W11 to V31. Residues N32–K37 lie on the Extracellular side of the membrane. Residues P38–L58 form a helical membrane-spanning segment. The Cytoplasmic portion of the chain corresponds to K59–K71. The chain crosses the membrane as a helical span at residues L72 to L92. At Q93 to P116 the chain is on the extracellular side. A helical membrane pass occupies residues P117 to F137. A topological domain (cytoplasmic) is located at residue N138. The chain crosses the membrane as a helical span at residues S139–G159. The Extracellular portion of the chain corresponds to S160 to S163. A helical membrane pass occupies residues V164 to G184. The Cytoplasmic portion of the chain corresponds to Q185–P201. A helical membrane pass occupies residues F202–F222. Topologically, residues S223–L234 are extracellular. The helical transmembrane segment at I235 to F255 threads the bilayer. Over S256–A270 the chain is Cytoplasmic. Residues I271–F291 traverse the membrane as a helical segment. Topologically, residues A292–S298 are extracellular. A helical transmembrane segment spans residues L299–V319. Topologically, residues P320–V340 are cytoplasmic.

This sequence belongs to the bile acid:sodium symporter (BASS) (TC 2.A.28) family. In terms of tissue distribution, strongly expressed in liver, adrenal gland, small intestine and colon. Moderately expressed in heart, lung, kidney and spleen. Weakly expressed in brain.

The protein localises to the cell membrane. It localises to the endoplasmic reticulum membrane. The protein resides in the golgi apparatus membrane. Involved in teeth and skeletal development. Has an essential role in the biosynthesis and trafficking of glycosaminoglycans and glycoproteins to produce a proper functioning extracellular matrix. Required for extracellular matrix mineralization. Also involved in the regulation of cellular calcium homeostasis. Does not show transport activity towards bile acids or steroid sulfates (including taurocholate, cholate, chenodeoxycholate, estrone-3-sulfate, dehydroepiandrosterone sulfate (DHEAS) and pregnenolone sulfate). This is Sodium/bile acid cotransporter 7 (Slc10a7) from Rattus norvegicus (Rat).